Consider the following 463-residue polypeptide: Argininosuccinate lyase (463 aa).

The protein belongs to the lyase 1 family. Argininosuccinate lyase subfamily.

The protein localises to the cytoplasm. The catalysed reaction is 2-(N(omega)-L-arginino)succinate = fumarate + L-arginine. The protein operates within amino-acid biosynthesis; L-arginine biosynthesis; L-arginine from L-ornithine and carbamoyl phosphate: step 3/3. This Streptococcus pneumoniae (strain JJA) protein is Argininosuccinate lyase.